The primary structure comprises 328 residues: Cytochrome c biogenesis protein CcsA (328 aa).

8 helical membrane passes run 13 to 33 (ISFS…LVNL), 46 to 66 (GIII…IYSG), 73 to 93 (LYES…VSYF), 101 to 121 (LNTI…SGLL), 146 to 166 (MILG…LLVI), 234 to 254 (IISL…VWAN), 263 to 283 (WDPK…YLHI), and 295 to 315 (AIVA…VNLL).

It belongs to the CcmF/CycK/Ccl1/NrfE/CcsA family. As to quaternary structure, may interact with Ccs1.

It localises to the plastid. The protein localises to the chloroplast thylakoid membrane. Required during biogenesis of c-type cytochromes (cytochrome c6 and cytochrome f) at the step of heme attachment. This Arabidopsis thaliana (Mouse-ear cress) protein is Cytochrome c biogenesis protein CcsA.